Reading from the N-terminus, the 255-residue chain is tRNA (guanine-N(1)-)-methyltransferase (255 aa).

S-adenosyl-L-methionine contacts are provided by residues Gly113 and 133–138 (IGDYVL).

It belongs to the RNA methyltransferase TrmD family. As to quaternary structure, homodimer.

It is found in the cytoplasm. The catalysed reaction is guanosine(37) in tRNA + S-adenosyl-L-methionine = N(1)-methylguanosine(37) in tRNA + S-adenosyl-L-homocysteine + H(+). Functionally, specifically methylates guanosine-37 in various tRNAs. The protein is tRNA (guanine-N(1)-)-methyltransferase of Enterobacter sp. (strain 638).